The primary structure comprises 1414 residues: Phenyloxazoline synthase MbtB (1414 aa).

The Carrier 1 domain occupies 5–78; it reads TACSEIIRAE…AWSQLVSAGT (74 aa). At serine 39 the chain carries O-(pantetheine 4'-phosphoryl)serine. The segment at 96–394 is condensation/cyclization; the sequence is EGEPFPLAPM…SSLLLDVDLT (299 aa). An adenylation region spans residues 579 to 975; that stretch reads SYAQLRDQAS…RLPGVHAAAA (397 aa). Residues 1057–1135 form the Carrier 2 domain; sequence APRTVLQRAL…ALAQLLTGRE (79 aa). Serine 1094 is modified (O-(pantetheine 4'-phosphoryl)serine). The thioesterase stretch occupies residues 1188 to 1413; it reads GAVLVFPHAG…AVARMVSADV (226 aa).

Belongs to the ATP-dependent AMP-binding enzyme family. MbtB subfamily. Pantetheine 4'-phosphate is required as a cofactor. In terms of processing, 4'-phosphopantetheine is transferred from CoA to a specific serine in each of the two carrier protein domains, leading to their activation from apo to holo forms.

It participates in siderophore biosynthesis; mycobactin biosynthesis. Its function is as follows. Involved in the initial steps of the mycobactin biosynthetic pathway. Putatively couples activated salicylic acid with serine or threonine and cyclizes this precursor to the hydroxyphenyloxazoline ring system present in this class of siderophores. In Mycobacterium bovis (strain ATCC BAA-935 / AF2122/97), this protein is Phenyloxazoline synthase MbtB (mbtB).